The sequence spans 284 residues: 2-dehydro-3-deoxyphosphooctonate aldolase (284 aa).

The protein belongs to the KdsA family.

It localises to the cytoplasm. It catalyses the reaction D-arabinose 5-phosphate + phosphoenolpyruvate + H2O = 3-deoxy-alpha-D-manno-2-octulosonate-8-phosphate + phosphate. Its pathway is carbohydrate biosynthesis; 3-deoxy-D-manno-octulosonate biosynthesis; 3-deoxy-D-manno-octulosonate from D-ribulose 5-phosphate: step 2/3. It functions in the pathway bacterial outer membrane biogenesis; lipopolysaccharide biosynthesis. In Yersinia pseudotuberculosis serotype O:1b (strain IP 31758), this protein is 2-dehydro-3-deoxyphosphooctonate aldolase.